The following is a 309-amino-acid chain: tRNA dimethylallyltransferase (309 aa).

Residue 11-18 participates in ATP binding; sequence GPTATGKS. 13-18 is a substrate binding site; it reads TATGKS.

The protein belongs to the IPP transferase family. In terms of assembly, monomer. Requires Mg(2+) as cofactor.

The catalysed reaction is adenosine(37) in tRNA + dimethylallyl diphosphate = N(6)-dimethylallyladenosine(37) in tRNA + diphosphate. Its function is as follows. Catalyzes the transfer of a dimethylallyl group onto the adenine at position 37 in tRNAs that read codons beginning with uridine, leading to the formation of N6-(dimethylallyl)adenosine (i(6)A). The sequence is that of tRNA dimethylallyltransferase from Rhodococcus jostii (strain RHA1).